The following is a 337-amino-acid chain: UDP-3-O-acylglucosamine N-acyltransferase 2 (337 aa).

The Proton acceptor role is filled by H238.

This sequence belongs to the transferase hexapeptide repeat family. LpxD subfamily. As to quaternary structure, homotrimer.

The enzyme catalyses a UDP-3-O-[(3R)-3-hydroxyacyl]-alpha-D-glucosamine + a (3R)-hydroxyacyl-[ACP] = a UDP-2-N,3-O-bis[(3R)-3-hydroxyacyl]-alpha-D-glucosamine + holo-[ACP] + H(+). Its pathway is bacterial outer membrane biogenesis; LPS lipid A biosynthesis. Catalyzes the N-acylation of UDP-3-O-acylglucosamine using 3-hydroxyacyl-ACP as the acyl donor. Is involved in the biosynthesis of lipid A, a phosphorylated glycolipid that anchors the lipopolysaccharide to the outer membrane of the cell. This Francisella tularensis subsp. tularensis (strain FSC 198) protein is UDP-3-O-acylglucosamine N-acyltransferase 2.